A 443-amino-acid polypeptide reads, in one-letter code: MRIVAILLLFCLCRAAEPRKSSPGVLRSQGNPSRSHGRGGRRGSSPVKRYAPGLPCDVYTYLHEKYLDCQERKLVYVLPDWPQDLLHMLLARNKIRVLKNNMFAKFKRLKSLDLQQNEISKIESEAFFGLNKLTTLLLQHNQIKVLTEEAFIYTPLLSYLRLYDNPWHCTCELETLISMLQIPRNRNLGNYAKCGSPPALRNKKLLQLKPQELCDEEEKEQLDPKPQVSGIPAVIRPEADSTLCHNYVFPIQTLDCKRKELKKVPSNIPPDIVKLDLSSNKIRQLRPKEFEDVHELKKLNLSSNGIEFIDPAAFLGLIHLEELDLSNNSLQNFDYGVLEDLYFLKLLWLRDNPWRCDYSIHYLYYWLKHHYNVHYNGLECKTPEEYKGWSVGKYVRSYYEECPKDKLPAYPETFDQDTEDDEWQKIHRDHPAKKHRVRITIVG.

Positions 1 to 15 (MRIVAILLLFCLCRA) are cleaved as a signal peptide. Positions 20–48 (KSSPGVLRSQGNPSRSHGRGGRRGSSPVK) are disordered. 3 LRR repeats span residues 84 to 105 (DLLHMLLARNKIRVLKNNMFAK), 108 to 129 (RLKSLDLQQNEISKIESEAFFG), and 132 to 153 (KLTTLLLQHNQIKVLTEEAFIY). Residues 165-216 (NPWHCTCELETLISMLQIPRNRNLGNYAKCGSPPALRNKKLLQLKPQELCDE) enclose the LRRCT 1 domain. The region spanning 229–270 (SGIPAVIRPEADSTLCHNYVFPIQTLDCKRKELKKVPSNIPP) is the LRRNT domain. LRR repeat units lie at residues 271–292 (DIVKLDLSSNKIRQLRPKEFED), 295–316 (ELKKLNLSSNGIEFIDPAAFLG), and 319–342 (HLEELDLSNNSLQNFDYGVLEDLY). The LRRCT 2 domain occupies 352-404 (NPWRCDYSIHYLYYWLKHHYNVHYNGLECKTPEEYKGWSVGKYVRSYYEECPK).

In terms of tissue distribution, expressed in osteoblasts, spleen, lung and heart.

Its subcellular location is the secreted. The protein resides in the extracellular space. Functionally, involved in bone homeostasis. Acts as a negative regulator of RANKL-induced osteoclast precursor differentiation from bone marrow precursors. This is Leucine-rich repeat-containing protein 17 (Lrrc17) from Mus musculus (Mouse).